The primary structure comprises 1366 residues: DNA-directed RNA polymerase subunit beta' (1366 aa).

Positions 1 to 23 are enriched in basic residues; sequence MTSSKPKKSSRVRKTTKNSKKNH. Residues 1 to 37 form a disordered region; the sequence is MTSSKPKKSSRVRKTTKNSKKNHNTMMPLLPKTPPSF. Positions 248, 315, 322, and 325 each coordinate Zn(2+). The segment at 1304-1366 is disordered; sequence TAILDDPSDE…LQEEGLLSDG (63 aa). Low complexity predominate over residues 1354–1366; the sequence is LEGLQEEGLLSDG.

This sequence belongs to the RNA polymerase beta' chain family. RpoC2 subfamily. In cyanobacteria the RNAP catalytic core is composed of 2 alpha, 1 beta, 1 beta', 1 gamma and 1 omega subunit. When a sigma factor is associated with the core the holoenzyme is formed, which can initiate transcription. Zn(2+) serves as cofactor.

It catalyses the reaction RNA(n) + a ribonucleoside 5'-triphosphate = RNA(n+1) + diphosphate. Its function is as follows. DNA-dependent RNA polymerase catalyzes the transcription of DNA into RNA using the four ribonucleoside triphosphates as substrates. The protein is DNA-directed RNA polymerase subunit beta' of Prochlorococcus marinus subsp. pastoris (strain CCMP1986 / NIES-2087 / MED4).